The following is a 154-amino-acid chain: MTVLASNDPPTAVLNAEQIMGLLPHRYPFALVDRVLEHVPGERAVALKNVTFNEPQFQGHFPGRPLMPGVLIVEAMAQVGGLIVTQMPDLPKGLFVFAGIDGVRFRRPVVPGDQLRITCELLSLKRKRFGKVKAEATVDGQLVCSGELMFSLVD.

Histidine 60 is an active-site residue.

Belongs to the thioester dehydratase family. FabZ subfamily.

The protein resides in the cytoplasm. It carries out the reaction a (3R)-hydroxyacyl-[ACP] = a (2E)-enoyl-[ACP] + H2O. In terms of biological role, involved in unsaturated fatty acids biosynthesis. Catalyzes the dehydration of short chain beta-hydroxyacyl-ACPs and long chain saturated and unsaturated beta-hydroxyacyl-ACPs. The sequence is that of 3-hydroxyacyl-[acyl-carrier-protein] dehydratase FabZ from Synechococcus sp. (strain CC9311).